The chain runs to 488 residues: Inositol 1,3,4-trisphosphate 5/6-kinase 4 (488 aa).

The 1D-myo-inositol 1,3,4-trisphosphate site is built by Lys208 and Lys224. An ATP-grasp domain is found at Asn246–His488. Residues Arg263 and Lys315 each contribute to the ATP site. Positions 326 and 360 each coordinate 1D-myo-inositol 1,3,4-trisphosphate. ATP is bound by residues Gln349–Lys360, Ser375, and Ser398. Mg(2+) contacts are provided by Asp439, Asp453, and Asn455. 1D-myo-inositol 1,3,4-trisphosphate contacts are provided by Asn455 and Ser459.

The protein belongs to the ITPK1 family. As to quaternary structure, monomer. Mg(2+) is required as a cofactor. Expressed in roots, leaf vasculature, cauline leaves, flower buds and siliques.

The enzyme catalyses 1D-myo-inositol 1,3,4-trisphosphate + ATP = 1D-myo-inositol 1,3,4,5-tetrakisphosphate + ADP + H(+). It catalyses the reaction 1D-myo-inositol 1,3,4-trisphosphate + ATP = 1D-myo-inositol 1,3,4,6-tetrakisphosphate + ADP + H(+). Kinase that can phosphorylate the inositol polyphosphate Ins(1,3,4)P3 to form InsP4. Also phosphorylates a racemic mixture of Ins(1,4,6)P3 and Ins(3,4,6)P3 to form InsP4. Does not display inositol 3,4,5,6-tetrakisphosphate 1-kinase activity, but possesses inositol 1,4,5,6-tetrakisphosphate and inositol 1,3,4,5-tetrakisphosphate isomerase activity. Ins(1,3,4,6)P4 is an essential molecule in the hexakisphosphate (InsP6) pathway. The chain is Inositol 1,3,4-trisphosphate 5/6-kinase 4 (ITPK4) from Arabidopsis thaliana (Mouse-ear cress).